A 385-amino-acid chain; its full sequence is 1-deoxy-D-xylulose 5-phosphate reductoisomerase (385 aa).

NADPH is bound by residues Thr-10, Gly-11, Ser-12, Ile-13, Lys-37, and Asn-124. Lys-125 contacts 1-deoxy-D-xylulose 5-phosphate. Glu-126 contributes to the NADPH binding site. Position 150 (Asp-150) interacts with Mn(2+). 1-deoxy-D-xylulose 5-phosphate contacts are provided by Ser-151, Glu-152, Ser-176, and His-199. Glu-152 serves as a coordination point for Mn(2+). Residue Gly-205 coordinates NADPH. Residues Ser-212, Asn-217, Lys-218, and Glu-221 each coordinate 1-deoxy-D-xylulose 5-phosphate. Glu-221 contributes to the Mn(2+) binding site.

It belongs to the DXR family. The cofactor is Mg(2+). Requires Mn(2+) as cofactor.

It catalyses the reaction 2-C-methyl-D-erythritol 4-phosphate + NADP(+) = 1-deoxy-D-xylulose 5-phosphate + NADPH + H(+). It participates in isoprenoid biosynthesis; isopentenyl diphosphate biosynthesis via DXP pathway; isopentenyl diphosphate from 1-deoxy-D-xylulose 5-phosphate: step 1/6. In terms of biological role, catalyzes the NADPH-dependent rearrangement and reduction of 1-deoxy-D-xylulose-5-phosphate (DXP) to 2-C-methyl-D-erythritol 4-phosphate (MEP). In Clostridium botulinum (strain Loch Maree / Type A3), this protein is 1-deoxy-D-xylulose 5-phosphate reductoisomerase.